Consider the following 296-residue polypeptide: Glycine and tyrosine-rich protein (296 aa).

An N-terminal signal peptide occupies residues 1-18; the sequence is MKVLVTALIISFSTAVLT. The segment at 157-280 is disordered; sequence MESRLRPQAT…NQPEETPAPN (124 aa). Positions 172–264 are enriched in low complexity; the sequence is TGGQPSTGGK…STGGQPSTGG (93 aa).

In terms of tissue distribution, component of the acid-insoluble and acid-soluble organic matrix of calcified layers of the shell (at protein level).

Its subcellular location is the secreted. This chain is Glycine and tyrosine-rich protein, found in Lottia gigantea (Giant owl limpet).